Here is a 226-residue protein sequence, read N- to C-terminus: Ribonuclease 3 (226 aa).

In terms of domain architecture, RNase III spans 6 to 128; that stretch reads INKLQRKLGY…LIGGVFLDSD (123 aa). Glu41 provides a ligand contact to Mg(2+). The active site involves Asp45. Asp114 and Glu117 together coordinate Mg(2+). The active site involves Glu117. The region spanning 155 to 225 is the DRBM domain; the sequence is DPKTRLQEFL…AEQALIKLGI (71 aa).

Belongs to the ribonuclease III family. Homodimer. Mg(2+) is required as a cofactor.

It localises to the cytoplasm. It catalyses the reaction Endonucleolytic cleavage to 5'-phosphomonoester.. Digests double-stranded RNA. Involved in the processing of primary rRNA transcript to yield the immediate precursors to the large and small rRNAs (23S and 16S). Processes some mRNAs, and tRNAs when they are encoded in the rRNA operon. Processes pre-crRNA and tracrRNA of type II CRISPR loci if present in the organism. The chain is Ribonuclease 3 from Erwinia tasmaniensis (strain DSM 17950 / CFBP 7177 / CIP 109463 / NCPPB 4357 / Et1/99).